A 574-amino-acid polypeptide reads, in one-letter code: Aspartate--tRNA ligase (574 aa).

Glu172 lines the L-aspartate pocket. Residues 196 to 199 (QIFK) form an aspartate region. Arg218 serves as a coordination point for L-aspartate. ATP-binding positions include 218-220 (RDE) and Gln227. L-aspartate is bound at residue His453. Glu487 lines the ATP pocket. Residue Arg494 coordinates L-aspartate. 539 to 542 (GLDR) is a binding site for ATP.

The protein belongs to the class-II aminoacyl-tRNA synthetase family. Type 1 subfamily. As to quaternary structure, homodimer.

The protein localises to the cytoplasm. The enzyme catalyses tRNA(Asp) + L-aspartate + ATP = L-aspartyl-tRNA(Asp) + AMP + diphosphate. Catalyzes the attachment of L-aspartate to tRNA(Asp) in a two-step reaction: L-aspartate is first activated by ATP to form Asp-AMP and then transferred to the acceptor end of tRNA(Asp). This is Aspartate--tRNA ligase from Blochmanniella pennsylvanica (strain BPEN).